A 727-amino-acid chain; its full sequence is Catalase-peroxidase (727 aa).

The tract at residues 1 to 21 (MDAKVEDNIAGKCPMGHGRGP) is disordered. Positions 95 to 217 (WHAAGTYRIT…LGAVQMGLIY (123 aa)) form a cross-link, tryptophyl-tyrosyl-methioninium (Trp-Tyr) (with M-243). Histidine 96 serves as the catalytic Proton acceptor. Residues 217-243 (YVNPEGPNGNPDPLASARDIRETFARM) constitute a cross-link (tryptophyl-tyrosyl-methioninium (Tyr-Met) (with W-95)). Histidine 258 is a binding site for heme b.

This sequence belongs to the peroxidase family. Peroxidase/catalase subfamily. In terms of assembly, homodimer or homotetramer. The cofactor is heme b. Post-translationally, formation of the three residue Trp-Tyr-Met cross-link is important for the catalase, but not the peroxidase activity of the enzyme.

The catalysed reaction is H2O2 + AH2 = A + 2 H2O. It carries out the reaction 2 H2O2 = O2 + 2 H2O. Bifunctional enzyme with both catalase and broad-spectrum peroxidase activity. Important for stationary phase survival. This is Catalase-peroxidase from Caulobacter vibrioides (strain ATCC 19089 / CIP 103742 / CB 15) (Caulobacter crescentus).